Here is a 770-residue protein sequence, read N- to C-terminus: Metallothionein expression activator (770 aa).

Positions 77 to 97 (LVPSPKTGDGSSDKKNIDRTW) are disordered. Residues Ser80, Ser122, Ser247, Ser249, and Ser253 each carry the phosphoserine modification. At Thr259 the chain carries Phosphothreonine. The tract at residues 286–323 (PPPTLISPRMSNTSINGSPSRKYHRQRYPNKSPESNGL) is disordered. Over residues 294-304 (RMSNTSINGSP) the composition is skewed to polar residues. Phosphoserine is present on residues Ser385, Ser392, and Ser483. Residues Thr486 and Thr501 each carry the phosphothreonine modification. Position 564 is a phosphoserine (Ser564). 2 consecutive C2H2-type zinc fingers follow at residues 603–627 (FECL…IQTH) and 633–657 (YSCD…KISH). Residues 662 to 685 (YICPCGKRFNREDALMVHRSRMIC) form a C2H2-type 3; atypical zinc finger. Positions 699 to 770 (LTSPKKSLLD…RTLSNETDAL (72 aa)) are disordered. Over residues 705-745 (SLLDSPHDTSPVKETIARDKDGSVLMKMEEQLRDDMRKHGL) the composition is skewed to basic and acidic residues. 2 positions are modified to phosphoserine: Ser709 and Ser714. Residues 754 to 770 (AHEQNSNRTLSNETDAL) show a composition bias toward polar residues.

It is found in the nucleus. Its function is as follows. Plays a role in regulating basal-level expression of CUP1. Activates EGT2 transcription in the absence of SWI5. This chain is Metallothionein expression activator (ACE2), found in Saccharomyces cerevisiae (strain ATCC 204508 / S288c) (Baker's yeast).